Consider the following 254-residue polypeptide: tRNA (guanine-N(1)-)-methyltransferase (254 aa).

S-adenosyl-L-methionine-binding positions include glycine 121 and 141-146 (LGDYVL).

This sequence belongs to the RNA methyltransferase TrmD family. As to quaternary structure, homodimer.

It localises to the cytoplasm. It catalyses the reaction guanosine(37) in tRNA + S-adenosyl-L-methionine = N(1)-methylguanosine(37) in tRNA + S-adenosyl-L-homocysteine + H(+). Its function is as follows. Specifically methylates guanosine-37 in various tRNAs. The chain is tRNA (guanine-N(1)-)-methyltransferase from Psychrobacter cryohalolentis (strain ATCC BAA-1226 / DSM 17306 / VKM B-2378 / K5).